Reading from the N-terminus, the 102-residue chain is Guanyl-specific ribonuclease Pc (102 aa).

Cystine bridges form between Cys-2–Cys-10 and Cys-6–Cys-101. His-38 is an active-site residue. The Proton acceptor role is filled by Glu-56. The active-site Proton donor is the His-90.

It belongs to the ribonuclease N1/T1 family.

The catalysed reaction is [RNA] containing guanosine + H2O = an [RNA fragment]-3'-guanosine-3'-phosphate + a 5'-hydroxy-ribonucleotide-3'-[RNA fragment].. The polypeptide is Guanyl-specific ribonuclease Pc (Penicillium chrysogenum (Penicillium notatum)).